A 101-amino-acid polypeptide reads, in one-letter code: Cell division protein FtsB (101 aa).

Residues 1–3 (MRI) lie on the Cytoplasmic side of the membrane. The helical transmembrane segment at 4–21 (VIYSMLVLLIAIQYPLWL) threads the bilayer. At 22–101 (GKGGWLKVYE…KSSDTQVTKQ (80 aa)) the chain is on the periplasmic side. The stretch at 33–53 (ERQVELQEAKNSLLALRNAKL) forms a coiled coil.

This sequence belongs to the FtsB family. As to quaternary structure, part of a complex composed of FtsB, FtsL and FtsQ.

It localises to the cell inner membrane. Functionally, essential cell division protein. May link together the upstream cell division proteins, which are predominantly cytoplasmic, with the downstream cell division proteins, which are predominantly periplasmic. The protein is Cell division protein FtsB of Polynucleobacter necessarius subsp. necessarius (strain STIR1).